The primary structure comprises 129 residues: uncharacterized protein (129 aa).

The protein resides in the cytoplasm. The protein localises to the cytosol. It is found in the nucleus. This is an uncharacterized protein from Schizosaccharomyces pombe (strain 972 / ATCC 24843) (Fission yeast).